A 205-amino-acid polypeptide reads, in one-letter code: Lipoprotein MlpB (205 aa).

Residues 1-17 form the signal peptide; that stretch reads MKIINILFCLLLIVLNS. Residue C18 is the site of N-palmitoyl cysteine attachment. C18 carries S-diacylglycerol cysteine lipidation.

The protein belongs to the Multicopy lipoprotein (Mlp) family.

It is found in the cell outer membrane. Its function is as follows. An outer membrane protein that may participate in pathogenesis. Some human Lyme disease patients have antibodies against this protein. The Mlp proteins probably undergo intragenic recombination, generating new alleles. The protein is Lipoprotein MlpB of Borreliella burgdorferi (strain ATCC 35210 / DSM 4680 / CIP 102532 / B31) (Borrelia burgdorferi).